We begin with the raw amino-acid sequence, 2393 residues long: Leucine-rich repeat serine/threonine-protein kinase 1 (2393 aa).

10 ANK repeats span residues 56 to 86 (HGRTPLMLAAHNGKLDSLRTILMLSPNSLNL), 90 to 120 (RGKTALHMAAESGETSIVLELVELGSDPMKS), 123 to 152 (EGHCALELAQMAGHNEVAAKLIDAIQKESE), 197 to 226 (EDETALLIACTNGHIEIVRHLLQFEEHLLQ), 230 to 259 (SKDTVIHAAVSSQNVEVLQLCLEKFPQLVK), 264 to 293 (EGSTCLHWAARCGSSECVSTILNFPFPSEF), 317 to 347 (ECRTAMYLAVAEGHLEVVKAMTDFKCTSIDG), 361 to 390 (RGRTPFMLAAFNQNLPLMTLLLDAGADVNL), 407 to 437 (IGSGALVEAVRSDGLHIVHFLLDRGALDTDN), and 439 to 464 (ALRLAAQGKNEKLIRVFLVRLVFADP). 5 LRR repeats span residues 532-553 (AITRVDLSDNRLNTFPSILFQM), 555-576 (SLRSLNLADNSIRKIEIPTYYI), 580-600 (SLEILNLRNNQLECIAIQFLS), 604-625 (QLQQLDVSKNELSQLPEYIWLC), and 627-648 (ALKELNASYNRLSTLPMVARAS). A disordered region spans residues 649-675 (RGERPRLNNSNNNFNTQSPTQESNPIV). LRR repeat units lie at residues 718–739 (TLTTINLSFNKFHTFPFCLACT), 742–763 (RLLILNMSNNSMTSLPPMACVP), and 765–787 (HLRTLDLSYNKIQESFIEASPLH). The tract at residues 797–844 (TSNGSMLPKRRNSPARQHRSRSKSAVRSQRSLSVSRHHALIDPQKEEE) is disordered. The span at 804-820 (PKRRNSPARQHRSRSKS) shows a compositional bias: basic residues. Positions 821-830 (AVRSQRSLSV) are enriched in polar residues. Positions 835–844 (ALIDPQKEEE) are enriched in basic and acidic residues. LRR repeat units follow at residues 856 to 877 (WLKTLQLAGNRLRSISVTNAAS), 883 to 905 (ALNVMDISDNKLLQAPPDVARLT), 906 to 928 (LLSMLNLSGNTAIKELPPDYGML), and 930 to 952 (RLWSLSLKGCSLKEPLESMVNVE). One can recognise a Roc domain in the interval 969-1167 (ESKTYHHLRL…NTIYRTAWEV (199 aa)). GTP contacts are provided by residues 982 to 989 (GSDGVGKS), 1040 to 1044 (DFGGQ), and 1098 to 1101 (TNLD). A COR domain is found at 1233–1422 (FYAACTFLHD…GFWSRLVTRI (190 aa)). 2 disordered regions span residues 1361–1382 (CPSPAGSPTKSPLRRTSPTDQN) and 1596–1633 (RNGSRSRTSSSASHRRSQDDGELPITSSSHMKGSRTTG). Composition is skewed to polar residues over residues 1366–1382 (GSPTKSPLRRTSPTDQN) and 1620–1633 (ITSSSHMKGSRTTG). The Protein kinase domain occupies 1694-1992 (LKRSRMLGRG…LVGFCAAPEF (299 aa)). ATP contacts are provided by residues 1700–1708 (LGRGAFGFV) and Lys1726. Residue Asp1847 is the Proton acceptor of the active site.

The protein belongs to the protein kinase superfamily. TKL Ser/Thr protein kinase family. ROCO subfamily. The cofactor is Mg(2+). It depends on Mn(2+) as a cofactor. In terms of tissue distribution, expressed in cell bodies, but not in dendritic or axonal processes, of adult head neurons. Also present in non-neuronal tissues, such as the body wall musculature and the epithelial cells of the nematode vulva.

It is found in the golgi apparatus. The catalysed reaction is L-seryl-[protein] + ATP = O-phospho-L-seryl-[protein] + ADP + H(+). The enzyme catalyses L-threonyl-[protein] + ATP = O-phospho-L-threonyl-[protein] + ADP + H(+). Functionally, determines polarized sorting of synaptic vesicle (SV) proteins to the axons by excluding SV proteins from the dendrite-specific transport machinery in the Golgi. Role in stress response. Appears to antagonize the effects of pink-1 both in the regulation of axon guidance and stress response. This Caenorhabditis elegans protein is Leucine-rich repeat serine/threonine-protein kinase 1 (lrk-1).